The primary structure comprises 423 residues: Putative competence-damage inducible protein (423 aa).

The protein belongs to the CinA family.

This chain is Putative competence-damage inducible protein, found in Streptococcus pyogenes serotype M4 (strain MGAS10750).